A 148-amino-acid polypeptide reads, in one-letter code: Aspartate 1-decarboxylase (148 aa).

Ser-25 acts as the Schiff-base intermediate with substrate; via pyruvic acid in catalysis. The residue at position 25 (Ser-25) is a Pyruvic acid (Ser). Position 57 (Thr-57) interacts with substrate. Tyr-58 serves as the catalytic Proton donor. 73 to 75 contributes to the substrate binding site; that stretch reads GAA.

It belongs to the PanD family. Heterooctamer of four alpha and four beta subunits. Pyruvate is required as a cofactor. In terms of processing, is synthesized initially as an inactive proenzyme, which is activated by self-cleavage at a specific serine bond to produce a beta-subunit with a hydroxyl group at its C-terminus and an alpha-subunit with a pyruvoyl group at its N-terminus.

Its subcellular location is the cytoplasm. It carries out the reaction L-aspartate + H(+) = beta-alanine + CO2. It functions in the pathway cofactor biosynthesis; (R)-pantothenate biosynthesis; beta-alanine from L-aspartate: step 1/1. Functionally, catalyzes the pyruvoyl-dependent decarboxylation of aspartate to produce beta-alanine. In Rhodococcus erythropolis (strain PR4 / NBRC 100887), this protein is Aspartate 1-decarboxylase.